We begin with the raw amino-acid sequence, 217 residues long: Dihydroflavonol 4-reductase (217 aa).

2 residues coordinate NADP(+): lysine 27 and tyrosine 146.

The protein belongs to the NAD(P)-dependent epimerase/dehydratase family. Dihydroflavonol-4-reductase subfamily.

The enzyme catalyses a (2R,3S,4S)-leucoanthocyanidin + NADP(+) = a (2R,3R)-dihydroflavonol + NADPH + H(+). It catalyses the reaction (2S)-flavan-4-ol + NADP(+) = (2S)-flavanone + NADPH + H(+). It functions in the pathway pigment biosynthesis; anthocyanin biosynthesis. Functionally, bifunctional enzyme involved in flavonoid metabolism. This Medicago sativa (Alfalfa) protein is Dihydroflavonol 4-reductase (DFR1).